Reading from the N-terminus, the 199-residue chain is Rho-related protein racG (199 aa).

GTP-binding residues include alanine 13, glycine 15, lysine 16, threonine 17, cysteine 18, tyrosine 32, and threonine 35. Residue threonine 17 coordinates Mg(2+). 2 consecutive short sequence motifs (switch) follow at residues 26-37 (NAFPNEYIPTVF) and 57-75 (DTAG…YPST). Threonine 35 contributes to the Mg(2+) binding site. Residues lysine 116, aspartate 118, and alanine 159 each coordinate GTP. Cysteine methyl ester is present on cysteine 196. The S-geranylgeranyl cysteine moiety is linked to residue cysteine 196. A propeptide spans 197–199 (SLF) (removed in mature form).

Belongs to the small GTPase superfamily. Rho family. Mg(2+) serves as cofactor.

Its subcellular location is the cell membrane. The protein localises to the cytoplasm. It is found in the cytoskeleton. It catalyses the reaction GTP + H2O = GDP + phosphate + H(+). Its activity is regulated as follows. Regulated by guanine nucleotide exchange factors (GEFs) which promote the exchange of bound GDP for free GTP, GTPase activating proteins (GAPs) which increase the GTP hydrolysis activity, and GDP dissociation inhibitors which inhibit the dissociation of the nucleotide from the GTPase. Small GTPase which cycles between active GTP-bound and inactive GDP-bound states. Involved in actin cytoskeleton remodeling during capping of surface receptors and uroid formation. This is Rho-related protein racG from Entamoeba histolytica (strain ATCC 30459 / HM-1:IMSS / ABRM).